The primary structure comprises 243 residues: Lipid II isoglutaminyl synthase (glutamine-hydrolyzing) subunit GatD (243 aa).

The GATase cobBQ-type domain occupies 6–197; the sequence is IYHFMSDKLN…LHGPILPKNY (192 aa). Cysteine 94 acts as the Nucleophile in catalysis. Substrate is bound at residue arginine 128. Residue histidine 189 is part of the active site.

The protein belongs to the CobB/CobQ family. GatD subfamily. As to quaternary structure, forms a heterodimer with MurT.

It catalyses the reaction beta-D-GlcNAc-(1-&gt;4)-Mur2Ac(oyl-L-Ala-gamma-D-Glu-L-Lys-D-Ala-D-Ala)-di-trans,octa-cis-undecaprenyl diphosphate + L-glutamine + ATP + H2O = beta-D-GlcNAc-(1-&gt;4)-Mur2Ac(oyl-L-Ala-D-isoglutaminyl-L-Lys-D-Ala-D-Ala)-di-trans,octa-cis-undecaprenyl diphosphate + L-glutamate + ADP + phosphate + H(+). The enzyme catalyses L-glutamine + H2O = L-glutamate + NH4(+). It functions in the pathway cell wall biogenesis; peptidoglycan biosynthesis. In terms of biological role, the lipid II isoglutaminyl synthase complex catalyzes the formation of alpha-D-isoglutamine in the cell wall lipid II stem peptide. The GatD subunit catalyzes the hydrolysis of glutamine to glutamate and ammonia. The resulting ammonia molecule is channeled to the active site of MurT. This chain is Lipid II isoglutaminyl synthase (glutamine-hydrolyzing) subunit GatD, found in Staphylococcus aureus (strain N315).